Here is a 172-residue protein sequence, read N- to C-terminus: Small ribosomal subunit protein uS5 (172 aa).

One can recognise an S5 DRBM domain in the interval 17-80 (LREKMISVNR…EQARRNMFKV (64 aa)).

It belongs to the universal ribosomal protein uS5 family. As to quaternary structure, part of the 30S ribosomal subunit. Contacts proteins S4 and S8.

Functionally, with S4 and S12 plays an important role in translational accuracy. In terms of biological role, located at the back of the 30S subunit body where it stabilizes the conformation of the head with respect to the body. In Burkholderia thailandensis (strain ATCC 700388 / DSM 13276 / CCUG 48851 / CIP 106301 / E264), this protein is Small ribosomal subunit protein uS5.